The primary structure comprises 132 residues: Small ribosomal subunit protein uS8 (132 aa).

This sequence belongs to the universal ribosomal protein uS8 family. In terms of assembly, part of the 30S ribosomal subunit. Contacts proteins S5 and S12.

One of the primary rRNA binding proteins, it binds directly to 16S rRNA central domain where it helps coordinate assembly of the platform of the 30S subunit. This Mesorhizobium japonicum (strain LMG 29417 / CECT 9101 / MAFF 303099) (Mesorhizobium loti (strain MAFF 303099)) protein is Small ribosomal subunit protein uS8.